The following is a 147-amino-acid chain: Lipoprotein YfjS (147 aa).

The first 20 residues, 1–20 (MKRKTLPLLALVATSLFLSA), serve as a signal peptide directing secretion. Residue cysteine 21 is the site of N-palmitoyl cysteine attachment. A lipid anchor (S-diacylglycerol cysteine) is attached at cysteine 21.

The protein to E.coli YafY.

The protein resides in the cell inner membrane. Does not induce degP when overexpressed unless it is mutated to resemble YafY. This is Lipoprotein YfjS (yfjS) from Escherichia coli (strain K12).